A 428-amino-acid polypeptide reads, in one-letter code: Histidine--tRNA ligase (428 aa).

This sequence belongs to the class-II aminoacyl-tRNA synthetase family. As to quaternary structure, homodimer.

Its subcellular location is the cytoplasm. The catalysed reaction is tRNA(His) + L-histidine + ATP = L-histidyl-tRNA(His) + AMP + diphosphate + H(+). In Lactobacillus helveticus (strain DPC 4571), this protein is Histidine--tRNA ligase.